The following is a 1738-amino-acid chain: MEHSTPLNEEIVHKKNDENWVIAQKKVFTNWCNIFLNQRSQKIEDLETDLYDGILLGSLLEILSGKNVILSKCKQLKTRLHYINNLNFSLKFIGDEGLRLVGVASEDITDGNLKLILGLVWTLILRYQIQSMQNSKSSQQNLHSSTKPSELMLNWVKSQISDYGHHIKDLTTSFQNGLLFCALVHKLVPEKLDYKSLSESDSLGNLTLAFEVANKELGIPSILDPHDIITTPDELSILTYISLFPKVYQQTLEPLNNNNNISPSLSSSSSSLLNTPNKRNSIQLSKSTSFEQQNQQQQQQNLLSPNSYRNSISFSKSPSFEGSQSTGSSRSISPISSPIKNSTTGNSNLSKSTSFEKIEASNTTNNNTIIIAEESRVIEKIVEKIIEVEKIVEVEKIVEVEKIVEVEKIVEVEKIVKVDDIEKLTNLQDQLTEQQQQYQEKSLKLVNLELELQEKSNQLVDKSNQLSTMQATNSELMEKIGGLMNDLTDIPTQDIKEKDEIIANLKIESEKNLKCFQDDFNALQSRYSLTIEQTSQLQDRIKQLINELQERDDKFIEFTNSSNQSLADNQRVIDQLTNEKQSITLQLQDQQDIKEKEFQFEKQQLLSQIDSITTNIQEYQDKFNNLQQEFNTQQTLNQQETHRLTQQLYQINTDYNEKQTQLQSEIKDNQTINEQLNKQLSEKDKEIEKLSNQQEQQQDEKINNLLLEIKEKDCLIERINQQLLENIDLNSKYQQLLLEFENFKLNSSKEKENQLNELQSKQDERFNQLNDEKLEKEKQLQSIEDEFNQYKQQQLSSNSNIDQQLQSTIIELSELKEQKELNDSKLIEKEKQLQQLQQEFDQLNEKNQKDHQDQLELLEKQLKQLQQEYDQLNETNQSIENQLNQQNLINKENLNEKEQELLKLQNQLNQQIEKIQFDQQEFSKQNSINIELVNEKNEKLIQLQQDYDQLKQQNRSNDEKDENDLIEKENQLKSIQNELNQLIEKNESDHKEQQLKQQSIENDLIEKENQIQQLQSQLNEQRQQQSNQLSEKDQQLNQLIEKNQFDQKEQQLKQQSIENDLFEKENQIQQLQSQLNEQRQQQSNQLSEKDQQLNQLIEKNESDQKEQQLKQQSIENDLIEKENQIQQLQLQLNEQRQLQSEVSIDNDKILELEKQLKQCQSDLLKLNDEKQQQDKQLQDKQIEFDQLQLTFNQFKNDKDSQFIQLQDDQKQQLQSIQQDLNQLKQENQEKEKQLSEKDEKLQSIQFENQEKEKQLSEKDEKLQSIQQNLNQLNDENQEKVKQFSEKDEKLQSIQQDLNQLKQENQEKEKQLSEKDEKLQSIQQDLNQLNDDQIKKNEKLKEKEEQLLKLQQDFNDQQSQQLKQLEEKLSEKENQLQQLKQENEINQLNQQQQSNEIIQQLKDQLLKQQQQEQQENNNEKEIERLIQEIEQLKQQQEIDQSELSNKEIKIQTTQQEFDQLSHNRSKDQLHLQQLQQELDQLKQSFDDQDHQFKKVIDERYNLQLQLEQSTLSNNQLDQLLKEKLKPLELDSNEKQKTIDDLLSNISNLQISLQNDKDLISERNNSIKTLESRITQQLSLLDEKDNLIKDLQQQKQQQQQPPTASSSPSSSPSLLSSTPTPKPQRPNQIEIDRLVNEIVNRNQDLIRKNKTKFYKLENGDYIVNSIIYRLSLDDDNDSDLIAQEYENGNSTTFEKSLRIFPSKNTRPIFDWRALFFIGAAVLAISTLFSSSRPIKYEKPT.

Positions 1-248 are actin-binding; the sequence is MEHSTPLNEE…TYISLFPKVY (248 aa). The Cytoplasmic portion of the chain corresponds to 1–1705; that stretch reads MEHSTPLNEE…RIFPSKNTRP (1705 aa). 2 consecutive Calponin-homology (CH) domains span residues 22–128 and 146–249; these read IAQK…LRYQ and TKPS…KVYQ. Disordered regions lie at residues 285–350, 1068–1090, and 1589–1627; these read SKST…SNLS, IQQL…SEKD, and LQQQ…PNQI. The segment covering 292 to 301 has biased composition (low complexity); sequence QQNQQQQQQN. A compositionally biased stretch (polar residues) spans 302–316; sequence LLSPNSYRNSISFSK. Low complexity-rich tracts occupy residues 317–344, 1068–1086, and 1589–1617; these read SPSF…NSTT, IQQL…SNQL, and LQQQ…SSTP. Residues 373–1598 are a coiled coil; sequence EESRVIEKIV…LQQQKQQQQQ (1226 aa). Residues 1706–1726 form a helical; Anchor for type IV membrane protein membrane-spanning segment; the sequence is IFDWRALFFIGAAVLAISTLF.

It belongs to the alpha-actinin family.

It localises to the nucleus membrane. Its subcellular location is the endoplasmic reticulum membrane. It is found in the golgi apparatus. The protein localises to the golgi stack membrane. The protein resides in the cytoplasm. It localises to the cytoskeleton. Its subcellular location is the microtubule organizing center. It is found in the centrosome. May function as linker between cellular membranes and the actin cytoskeleton. Required for normal development of fruiting bodies. This is Interaptin (abpD) from Dictyostelium discoideum (Social amoeba).